Reading from the N-terminus, the 35-residue chain is Small toxic polypeptide LdrA (35 aa).

Residues 8 to 28 (MIFWHDLAAPILAGIITAAIV) traverse the membrane as a helical segment.

It belongs to the Ldr toxic peptide family.

Its subcellular location is the cell inner membrane. Its function is as follows. Toxic component of a type I toxin-antitoxin (TA) system. Inhibits ATP synthesis possibly due to its insertion in the cell inner membrane, ATP levels drop over 50% 2 minutes after induction. Overexpression is toxic leading to cell death, it inhibits cell growth within 30 minutes; C-terminally tagged versions of the protein are toxic while N-terminally tagged versions are not. The sequence is that of Small toxic polypeptide LdrA (ldrA) from Escherichia coli (strain K12).